The sequence spans 763 residues: Cyclin-F (763 aa).

The Nuclear localization signal 1 motif lies at 19–27; sequence KRRVKRRPR. The region spanning 28–75 is the F-box domain; that stretch reads VLTLLSLPEDVLLYVLECLPAVDILSMREVHPHLRSLVDSHSSVWARA. In terms of domain architecture, Cyclin N-terminal spans 299–411; it reads INKTSIFTTQ…EIISALEGKI (113 aa). 2 short sequence motifs (d box) span residues 316–319 and 355–358; these read RYIL and RAKL. 2 disordered regions span residues 574–600 and 677–763; these read GSKT…TAEL and KLEN…SDEL. The Nuclear localization signal 2 motif lies at 575–581; the sequence is SKTKRRR. Residues 580 to 590 show a composition bias toward basic and acidic residues; it reads RREDSIQEDRG. Residues 589-747 form a PEST region; sequence RGSFVTTPTA…LFKASRRQVK (159 aa). The segment covering 692–710 has biased composition (low complexity); that stretch reads SSGYSSVSSGGSPTSSSSP. Basic residues predominate over residues 741 to 751; it reads ASRRQVKRKNQ.

The protein belongs to the cyclin family. Cyclin AB subfamily. Component of the SCF(CCNF) complex.

Its subcellular location is the nucleus. It localises to the cytoplasm. It is found in the perinuclear region. The protein localises to the cytoskeleton. The protein resides in the microtubule organizing center. Its subcellular location is the centrosome. It localises to the centriole. Functionally, substrate recognition component of the SCF(CCNF) E3 ubiquitin-protein ligase complex which mediates the ubiquitination and subsequent proteasomal degradation of target proteins. The SCF(CCNF) E3 ubiquitin-protein ligase complex is an integral component of the ubiquitin proteasome system (UPS) and links proteasome degradation to the cell cycle. Mediates the substrate recognition and the proteasomal degradation of various target proteins during G2 phase involved in the regulation of cell cycle progression and in the maintenance of genome stability. This Xenopus tropicalis (Western clawed frog) protein is Cyclin-F (ccnf).